An 899-amino-acid chain; its full sequence is Probable dipeptidyl-aminopeptidase B (899 aa).

The interval 1-69 is disordered; that stretch reads MKLDRMRVGS…NHNGRTQGNY (69 aa). At 1 to 99 the chain is on the cytoplasmic side; it reads MKLDRMRVGS…NGKSSQRRTL (99 aa). Residues 32 to 43 are compositionally biased toward low complexity; sequence DSSSTASISLTL. Residues 100–120 traverse the membrane as a helical; Signal-anchor for type II membrane protein segment; it reads IVFWLLVALCVGGWAVAFLFF. At 121-899 the chain is on the vacuolar side; the sequence is VTSPGNKTST…KYFNLSFLGH (779 aa). The span at 128 to 139 shows a compositional bias: polar residues; it reads TSTSPHSGSNSP. The disordered stretch occupies residues 128–149; that stretch reads TSTSPHSGSNSPEGDVTKPGIP. Asn-212, Asn-308, and Asn-360 each carry an N-linked (GlcNAc...) asparagine glycan. Catalysis depends on Ser-765, which acts as the Charge relay system. Residues Asn-819, Asn-824, and Asn-827 are each glycosylated (N-linked (GlcNAc...) asparagine). Residues Asp-842 and His-875 each act as charge relay system in the active site. Residue Asn-893 is glycosylated (N-linked (GlcNAc...) asparagine).

The protein belongs to the peptidase S9B family.

It is found in the vacuole membrane. The enzyme catalyses Release of an N-terminal dipeptide, Xaa-Yaa-|-Zaa-, from a polypeptide, preferentially when Yaa is Pro, provided Zaa is neither Pro nor hydroxyproline.. Functionally, type IV dipeptidyl-peptidase which removes N-terminal dipeptides sequentially from polypeptides having unsubstituted N-termini provided that the penultimate residue is proline. This is Probable dipeptidyl-aminopeptidase B (DAPB) from Trichophyton verrucosum (strain HKI 0517).